The following is a 61-amino-acid chain: MAKKALIVKAQRKPKFAVRAYTRCNRCGRPHSVYRKFGLCRLCLREMAHRGELPGVTKSSW.

Cys24, Cys27, Cys40, and Cys43 together coordinate Zn(2+).

It belongs to the universal ribosomal protein uS14 family. Zinc-binding uS14 subfamily. In terms of assembly, part of the 30S ribosomal subunit. Contacts proteins S3 and S10. Requires Zn(2+) as cofactor.

Its function is as follows. Binds 16S rRNA, required for the assembly of 30S particles and may also be responsible for determining the conformation of the 16S rRNA at the A site. The sequence is that of Small ribosomal subunit protein uS14 from Acidothermus cellulolyticus (strain ATCC 43068 / DSM 8971 / 11B).